A 566-amino-acid polypeptide reads, in one-letter code: Malate synthase, glyoxysomal (566 aa).

Arg-182 functions as the Proton acceptor in the catalytic mechanism. Residue Asp-467 is the Proton donor of the active site. A Microbody targeting signal motif is present at residues Ser-564 to Leu-566.

The protein belongs to the malate synthase family.

It localises to the glyoxysome. It carries out the reaction glyoxylate + acetyl-CoA + H2O = (S)-malate + CoA + H(+). It participates in carbohydrate metabolism; glyoxylate cycle; (S)-malate from isocitrate: step 2/2. The chain is Malate synthase, glyoxysomal from Cucurbita maxima (Pumpkin).